Consider the following 161-residue polypeptide: Protein shisa-like-2B (161 aa).

A helical transmembrane segment spans residues 65 to 85 (IGALIGLGIAALVLLAFVISV). The segment at 115–134 (QEGNSNRKSKAPRSNAASNS) is disordered.

Belongs to the shisa family.

The protein localises to the membrane. The polypeptide is Protein shisa-like-2B (SHISAL2B) (Bos taurus (Bovine)).